Reading from the N-terminus, the 337-residue chain is Phosphate acyltransferase (337 aa).

It belongs to the PlsX family. In terms of assembly, homodimer. Probably interacts with PlsY.

It is found in the cytoplasm. The catalysed reaction is a fatty acyl-[ACP] + phosphate = an acyl phosphate + holo-[ACP]. The protein operates within lipid metabolism; phospholipid metabolism. Its function is as follows. Catalyzes the reversible formation of acyl-phosphate (acyl-PO(4)) from acyl-[acyl-carrier-protein] (acyl-ACP). This enzyme utilizes acyl-ACP as fatty acyl donor, but not acyl-CoA. The polypeptide is Phosphate acyltransferase (Listeria monocytogenes serotype 4b (strain F2365)).